Consider the following 93-residue polypeptide: Large ribosomal subunit protein uL23cz/uL23cy (93 aa).

This sequence belongs to the universal ribosomal protein uL23 family. As to quaternary structure, part of the 50S ribosomal subunit.

Its subcellular location is the plastid. The protein localises to the chloroplast. Its function is as follows. Binds to 23S rRNA. This chain is Large ribosomal subunit protein uL23cz/uL23cy (rpl23-A), found in Coffea arabica (Arabian coffee).